The sequence spans 185 residues: Large ribosomal subunit protein bL25 (185 aa).

It belongs to the bacterial ribosomal protein bL25 family. CTC subfamily. As to quaternary structure, part of the 50S ribosomal subunit; part of the 5S rRNA/L5/L18/L25 subcomplex. Contacts the 5S rRNA. Binds to the 5S rRNA independently of L5 and L18.

In terms of biological role, this is one of the proteins that binds to the 5S RNA in the ribosome where it forms part of the central protuberance. This Chlamydia caviae (strain ATCC VR-813 / DSM 19441 / 03DC25 / GPIC) (Chlamydophila caviae) protein is Large ribosomal subunit protein bL25.